A 339-amino-acid chain; its full sequence is Lipoyl synthase (339 aa).

Residues 13 to 35 form a disordered region; it reads RPKLDAPARPRHPEKAHRPDTAI. [4Fe-4S] cluster is bound by residues Cys-68, Cys-73, Cys-79, Cys-94, Cys-98, Cys-101, and Ser-307. The Radical SAM core domain maps to 80–296; the sequence is WEKRHATFMI…ETTAYAKGFL (217 aa).

The protein belongs to the radical SAM superfamily. Lipoyl synthase family. It depends on [4Fe-4S] cluster as a cofactor.

Its subcellular location is the cytoplasm. The enzyme catalyses [[Fe-S] cluster scaffold protein carrying a second [4Fe-4S](2+) cluster] + N(6)-octanoyl-L-lysyl-[protein] + 2 oxidized [2Fe-2S]-[ferredoxin] + 2 S-adenosyl-L-methionine + 4 H(+) = [[Fe-S] cluster scaffold protein] + N(6)-[(R)-dihydrolipoyl]-L-lysyl-[protein] + 4 Fe(3+) + 2 hydrogen sulfide + 2 5'-deoxyadenosine + 2 L-methionine + 2 reduced [2Fe-2S]-[ferredoxin]. The protein operates within protein modification; protein lipoylation via endogenous pathway; protein N(6)-(lipoyl)lysine from octanoyl-[acyl-carrier-protein]: step 2/2. Catalyzes the radical-mediated insertion of two sulfur atoms into the C-6 and C-8 positions of the octanoyl moiety bound to the lipoyl domains of lipoate-dependent enzymes, thereby converting the octanoylated domains into lipoylated derivatives. This Methylorubrum extorquens (strain CM4 / NCIMB 13688) (Methylobacterium extorquens) protein is Lipoyl synthase.